A 100-amino-acid chain; its full sequence is ATP-dependent Clp protease adapter protein ClpS (100 aa).

It belongs to the ClpS family. As to quaternary structure, binds to the N-terminal domain of the chaperone ClpA.

Its function is as follows. Involved in the modulation of the specificity of the ClpAP-mediated ATP-dependent protein degradation. In Corynebacterium glutamicum (strain R), this protein is ATP-dependent Clp protease adapter protein ClpS.